Consider the following 422-residue polypeptide: Methylaspartate ammonia-lyase (422 aa).

Gln-175 is a binding site for (2S,3S)-3-methyl-L-aspartate. Positions 239, 276, and 310 each coordinate Mg(2+). Gln-332 is a binding site for (2S,3S)-3-methyl-L-aspartate. Residue Lys-334 is the Proton acceptor of the active site. Residue 363-364 (TC) participates in (2S,3S)-3-methyl-L-aspartate binding.

This sequence belongs to the methylaspartate ammonia-lyase family. In terms of assembly, homodimer. The cofactor is Mg(2+).

It catalyses the reaction (2S,3S)-3-methyl-L-aspartate = mesaconate + NH4(+). It functions in the pathway amino-acid degradation; L-glutamate degradation via mesaconate pathway; acetate and pyruvate from L-glutamate: step 2/4. Functionally, involved in the methylaspartate cycle. Catalyzes the formation of the alpha,beta-unsaturated bond by the reversible anti elimination of ammonia from L-threo-beta-methylaspartate (L-threo-(2S,3S)-3-methylaspartate) to give mesaconate. The sequence is that of Methylaspartate ammonia-lyase (mal) from Haloarcula marismortui (strain ATCC 43049 / DSM 3752 / JCM 8966 / VKM B-1809) (Halobacterium marismortui).